A 492-amino-acid chain; its full sequence is MGLSSAAAGEGPQLCVFDLRRGQQEGQELDKILFFHPTDCPILLQLSVIGLCEGIITFARIFSPDDDCEVIESEKHSHVFYQAEADIWMVLVVEKNKDIESTWRCGALQGILKEVHSLFTMFHGPIRTLLDRQPSAELARGHLRTFFTDYLSDFNAGKKIQLPTFRDCLKERGTVQMLTISREVALEVQSLTTVLGSCLGNVMCQSLVLFEDLLVSTTLPPDDTLNLYTYAILRLTPRALLSNATSWSYLRKGTSVHAGPTSSSSNGTASVERPLQREKLYKGKDGFVAAGSTTSEVRGAVAWVPILWFQQAEDRMHLCVYQHKNITILLLIPASSLINGDDGIAHVKRHLLENASQNIVTLELKLSRGWGGENAYHVGGYRYLLVDPDRKVSRASPPGKVTTLSKDSLLSLNRLREEIDLEKSRAKRSDSCHDKDFEVCIRAKNNAWVIAKVTRGRELYMALEKAGETLLYASTAIEKFSNRYCEGAFSTD.

Residues Ser255–Leu275 form a disordered region. A compositionally biased stretch (polar residues) spans Pro260–Ala269.

This sequence belongs to the CCZ1 family. As to quaternary structure, interacts with MON1.

Its subcellular location is the endosome. The protein resides in the prevacuolar compartment. In terms of biological role, plays an important role in membrane trafficking through the secretory apparatus. In complex with MON1, acts as a guanine exchange factor (GEF) for Rab7 protein family. Promotes the exchange of GDP to GTP, converting it from an inactive GDP-bound form into an active GTP-bound form. The active form is involved in protein trafficking from prevacuolar compartments (PVCs) to vacuoles. May serve as a linker between Rab5 and Rab7 protein families in PVCs and mediate PVC maturation. The protein is Vacuolar fusion protein CCZ1 homolog of Oryza sativa subsp. japonica (Rice).